The following is a 129-amino-acid chain: Azurin iso-2 (129 aa).

Residues 1-129 enclose the Plastocyanin-like domain; it reads ASCETTVTSG…MMRGTLKLEE (129 aa). The cysteines at positions 3 and 26 are disulfide-linked. Positions 46, 112, 117, and 121 each coordinate Cu cation.

It is found in the periplasm. This methylothroph organism uses azurin in the oxidation of methylamine. Iso-2 is probably the acceptor of electrons from methylamine dehydrogenase. This Methylomonas sp. (strain J) protein is Azurin iso-2.